A 283-amino-acid chain; its full sequence is MRCSAISPGSGTIINAISTGKGSAFGIDLKIKANVELKNDGKSKINGILLDNPSLKPNLVERCVKNVLEHFEVDYSAKISTSSELPLKSGLSSSSAASNAAVLATFGALGEKIDSELILDLAIKSSFEEQLTITGAYDDATASYFGGITVCNNLERKILKKDVFKEELDVIILMPNFKKNLNVKRMKLISDYVELAFEKCMNADYYKALFLNGILYSSALNFPSYISVDALEAGAVTAGLSGTGPSYIALSYQENTEKVKNAFKKYGTVIISKPDNFGSKIIY.

Residue 86-96 (PLKSGLSSSSA) coordinates ATP.

The protein belongs to the GHMP kinase family. Archaeal shikimate kinase subfamily.

The protein resides in the cytoplasm. The catalysed reaction is shikimate + ATP = 3-phosphoshikimate + ADP + H(+). Its pathway is metabolic intermediate biosynthesis; chorismate biosynthesis; chorismate from D-erythrose 4-phosphate and phosphoenolpyruvate: step 5/7. This chain is Shikimate kinase, found in Methanococcus vannielii (strain ATCC 35089 / DSM 1224 / JCM 13029 / OCM 148 / SB).